We begin with the raw amino-acid sequence, 87 residues long: U3-theraphotoxin-Hhn1a 12 (87 aa).

The first 24 residues, 1-24 (MVNMKASMFLTFAGLVLLFVVCYA), serve as a signal peptide directing secretion. A propeptide spanning residues 25–52 (SESEEKEFPKEMLSSIFAVDKDFKQEER) is cleaved from the precursor. Intrachain disulfides connect C54–C67, C61–C72, and C66–C79.

Belongs to the neurotoxin 10 (Hwtx-1) family. 51 (Hntx-8) subfamily. Hntx-8 sub-subfamily. Expressed by the venom gland.

It localises to the secreted. In terms of biological role, ion channel inhibitor. The protein is U3-theraphotoxin-Hhn1a 12 of Cyriopagopus hainanus (Chinese bird spider).